The primary structure comprises 814 residues: DNA replication licensing factor Mcm6 (814 aa).

The C4-type zinc finger occupies 152–179 (CLDCQTEIRDVEQQFKFTNPTICRNPVC). The MCM domain maps to 339–545 (LYQNLINSLF…VVDYAIARKI (207 aa)). ATP is bound by residues S392, T393, A394, K395, S396, and N497. The Arginine finger signature appears at 521–524 (SRFD). ADP is bound by residues R612 and E615. The disordered stretch occupies residues 656 to 696 (DIHLDEEEGEENENVMDIGEETPEDTPRTNETEENDQDTPA). Residues 659 to 679 (LDEEEGEENENVMDIGEETPE) show a composition bias toward acidic residues.

Belongs to the MCM family. As to quaternary structure, component of the Mcm2-7 complex. The complex forms a toroidal hexameric ring with the proposed subunit order Mcm2-Mcm6-Mcm4-Mcm7-Mcm3-Mcm5 (By simililarity). The heterodimers of Mcm4/Mcm6 and Mcm3/Mcm5 interact with Mcm2 and Mcm7.

The protein localises to the nucleus. The enzyme catalyses ATP + H2O = ADP + phosphate + H(+). In terms of biological role, acts as a component of the MCM2-7 complex (MCM complex) which is the replicative helicase essential for 'once per cell cycle' DNA replication initiation and elongation in eukaryotic cells. Core component of CDC45-MCM-GINS (CMG) helicase, the molecular machine that unwinds template DNA during replication, and around which the replisome is built. The active ATPase sites in the MCM2-7 ring are formed through the interaction surfaces of two neighboring subunits such that a critical structure of a conserved arginine finger motif is provided in trans relative to the ATP-binding site of the Walker A box of the adjacent subunit. The six ATPase active sites, however, are likely to contribute differentially to the complex helicase activity. In Anopheles gambiae (African malaria mosquito), this protein is DNA replication licensing factor Mcm6.